The sequence spans 565 residues: Deoxyribodipyrimidine photo-lyase, mitochondrial (565 aa).

Residues 75-226 (STVMHWFRND…QLKYYHDSCI (152 aa)) enclose the Photolyase/cryptochrome alpha/beta domain. Residues Y326 and 338-342 (TSGLS) each bind FAD. Interaction with DNA regions lie at residues 384–391 (EVAWRDFY) and 451–452 (NR). Residue 482–484 (DGD) participates in FAD binding. Q514 contributes to the DNA binding site.

Belongs to the DNA photolyase class-1 family. In terms of assembly, monomer. It depends on FAD as a cofactor. (6R)-5,10-methylene-5,6,7,8-tetrahydrofolate serves as cofactor.

The protein resides in the nucleus. It localises to the mitochondrion. It catalyses the reaction cyclobutadipyrimidine (in DNA) = 2 pyrimidine residues (in DNA).. Its function is as follows. Involved in repair of UV radiation-induced DNA damage. Catalyzes the light-dependent monomerization (300-600 nm) of cyclobutyl pyrimidine dimers (in cis-syn configuration), which are formed between adjacent bases on the same DNA strand upon exposure to ultraviolet radiation. The sequence is that of Deoxyribodipyrimidine photo-lyase, mitochondrial (PHR1) from Saccharomyces cerevisiae (strain ATCC 204508 / S288c) (Baker's yeast).